The following is a 258-amino-acid chain: Transcription factor RSL3 (258 aa).

The D-box signature appears at 98 to 105 (RKLLDVEN). The interval 119–178 (ELAKSKKKQRVSSESNTVDESNTNWVDGQSLSNSSDDEKASVTSVKGKTRATKGTATDPQ) is disordered. Positions 130 to 152 (SSESNTVDESNTNWVDGQSLSNS) are enriched in polar residues. A basic motif region spans residues 173–186 (TATDPQSLYARKRR). A bHLH domain is found at 173–222 (TATDPQSLYARKRREKINERLKTLQNLVPNGTKVDISTMLEEAVHYVKFL). The tract at residues 187-222 (EKINERLKTLQNLVPNGTKVDISTMLEEAVHYVKFL) is helix-loop-helix motif.

In terms of assembly, homodimer. Ubiquitinated. Ubiquitination leads to its subsequent degradation by the 26S proteasome. In terms of tissue distribution, expressed constitutively in roots, leaves, and flowers. Expressed in root epidermal hair cells.

Its subcellular location is the nucleus. Functionally, transcription factor involved in the regulation of root hair elongation. Is sufficient to promote postmitotic cell growth in root-hair cells and is a direct transcriptional target of RHD6 and RSL1. Involved in the regulation of root hair elongation in response to low phosphate. Controls root hair cell growth by regulating the expression of genes encoding proteins involved in cell signaling, cell wall modification and secretion. This chain is Transcription factor RSL3, found in Arabidopsis thaliana (Mouse-ear cress).